The chain runs to 490 residues: Serine/threonine-protein kinase BSK6 (490 aa).

The N-myristoyl glycine moiety is linked to residue G2. At S25 the chain carries Phosphoserine. One can recognise a Protein kinase domain in the interval 56–310 (DNIVSEHGEK…KSLVTSLVTL (255 aa)). ATP-binding positions include 62–70 (HGEKAPNVV) and K84. D178 acts as the Proton acceptor in catalysis. The residue at position 373 (S373) is a Phosphoserine.

This sequence belongs to the protein kinase superfamily. Ser/Thr protein kinase family. In terms of assembly, interacts with BRI1, ASK7/BIN2, ASK9/BIL2, BSK1, BSK5, BSK8 and BSK11. In terms of processing, phosphorylated by BRI1, ASK7/BIN2 and ASK9/BIL2.

The protein localises to the cell membrane. It carries out the reaction L-seryl-[protein] + ATP = O-phospho-L-seryl-[protein] + ADP + H(+). It catalyses the reaction L-threonyl-[protein] + ATP = O-phospho-L-threonyl-[protein] + ADP + H(+). Probable serine/threonine kinase that acts as a positive regulator of brassinosteroid (BR) signaling downstream of the receptor kinase BRI1. Functions redundantly with BSK3, BSK4, BSK7 and BSK8. The protein is Serine/threonine-protein kinase BSK6 of Arabidopsis thaliana (Mouse-ear cress).